The primary structure comprises 496 residues: Probable ATP-dependent DNA helicase RecS (496 aa).

In terms of domain architecture, Helicase ATP-binding spans 25 to 192 (IESILSGKDT…MNLLELQHAV (168 aa)). 38–45 (LPTGGGKS) contributes to the ATP binding site. The short motif at 136–139 (DEAH) is the DEAH box element. The region spanning 219 to 363 (RVIQLVENLQ…EIADVIRVLE (145 aa)) is the Helicase C-terminal domain.

It belongs to the helicase family. RecQ subfamily. In terms of assembly, interacts with SSB (ssbA) and YpbB.

The protein resides in the cytoplasm. It localises to the nucleoid. It carries out the reaction Couples ATP hydrolysis with the unwinding of duplex DNA by translocating in the 3'-5' direction.. The enzyme catalyses ATP + H2O = ADP + phosphate + H(+). Its function is as follows. Probable 3'-5' DNA helicase. Required in synaptic and/or post-synaptic stages of recombination. Probably has an overlapping function with RecQ. It probably acts to help generate ss-DNA from ds-DNA breaks. The protein is Probable ATP-dependent DNA helicase RecS of Bacillus subtilis (strain 168).